Reading from the N-terminus, the 154-residue chain is Anaerobic ribonucleoside-triphosphate reductase-activating protein (154 aa).

Residues cysteine 26, cysteine 30, and cysteine 33 each coordinate [4Fe-4S] cluster. S-adenosyl-L-methionine is bound by residues 32–34 and glycine 74; that span reads GCY.

It belongs to the organic radical-activating enzymes family. As to quaternary structure, forms a tetramer composed of two NrdD and two NrdG subunits. Requires [4Fe-4S] cluster as cofactor.

The protein resides in the cytoplasm. The enzyme catalyses glycyl-[protein] + reduced [flavodoxin] + S-adenosyl-L-methionine = glycin-2-yl radical-[protein] + semiquinone [flavodoxin] + 5'-deoxyadenosine + L-methionine + H(+). Functionally, activation of anaerobic ribonucleoside-triphosphate reductase under anaerobic conditions by generation of an organic free radical, using S-adenosylmethionine and reduced flavodoxin as cosubstrates to produce 5'-deoxy-adenosine. In Salmonella typhimurium (strain LT2 / SGSC1412 / ATCC 700720), this protein is Anaerobic ribonucleoside-triphosphate reductase-activating protein (nrdG).